The primary structure comprises 120 residues: Large ribosomal subunit protein bL20 (120 aa).

It belongs to the bacterial ribosomal protein bL20 family.

In terms of biological role, binds directly to 23S ribosomal RNA and is necessary for the in vitro assembly process of the 50S ribosomal subunit. It is not involved in the protein synthesizing functions of that subunit. This Ureaplasma urealyticum serovar 10 (strain ATCC 33699 / Western) protein is Large ribosomal subunit protein bL20.